Reading from the N-terminus, the 79-residue chain is UPF0291 protein lp_2062 (79 aa).

This sequence belongs to the UPF0291 family.

It is found in the cytoplasm. The polypeptide is UPF0291 protein lp_2062 (Lactiplantibacillus plantarum (strain ATCC BAA-793 / NCIMB 8826 / WCFS1) (Lactobacillus plantarum)).